The primary structure comprises 291 residues: tRNA-cytidine(32) 2-sulfurtransferase (291 aa).

A PP-loop motif motif is present at residues 36 to 41 (SGGKDS). 3 residues coordinate [4Fe-4S] cluster: Cys-111, Cys-114, and Cys-202. Positions 258-291 (RDPWLDAEDEEAEDCGEPPAGDGVVSLGGARGGR) are disordered. Residues 262 to 273 (LDAEDEEAEDCG) show a composition bias toward acidic residues.

It belongs to the TtcA family. As to quaternary structure, homodimer. Requires Mg(2+) as cofactor. It depends on [4Fe-4S] cluster as a cofactor.

It is found in the cytoplasm. The catalysed reaction is cytidine(32) in tRNA + S-sulfanyl-L-cysteinyl-[cysteine desulfurase] + AH2 + ATP = 2-thiocytidine(32) in tRNA + L-cysteinyl-[cysteine desulfurase] + A + AMP + diphosphate + H(+). It functions in the pathway tRNA modification. In terms of biological role, catalyzes the ATP-dependent 2-thiolation of cytidine in position 32 of tRNA, to form 2-thiocytidine (s(2)C32). The sulfur atoms are provided by the cysteine/cysteine desulfurase (IscS) system. This chain is tRNA-cytidine(32) 2-sulfurtransferase, found in Anaeromyxobacter dehalogenans (strain 2CP-1 / ATCC BAA-258).